A 404-amino-acid chain; its full sequence is Agnestins biosynthesis cluster transcription factor AgnL10 (404 aa).

A DNA-binding region (zn(2)-C6 fungal-type) is located at residues 23–50 (CNRCAVSKIKCSKEKPACARCAKQDKVC). Disordered stretches follow at residues 54–83 (ATKRAGRKRGSRRHNNPVPSPTTQDLPTAA), 188–209 (ASASSMDPAAGPQRPPDEPSSG), and 294–318 (PGPDGDGVSWDNSTPPPGEQGAGVD). Residues 57-68 (RAGRKRGSRRHN) are compositionally biased toward basic residues. Residues 74–83 (PTTQDLPTAA) are compositionally biased toward polar residues. Low complexity predominate over residues 188–197 (ASASSMDPAA).

Its subcellular location is the nucleus. Transcription factor that regulates the expression of the gene cluster that mediates the biosynthesis of agnestins, dihydroxy-xanthone metabolites. This Paecilomyces divaricatus (Penicillium divaricatum) protein is Agnestins biosynthesis cluster transcription factor AgnL10.